The sequence spans 212 residues: Interleukin-6 (212 aa).

The signal sequence occupies residues 1-29 (MNSLSTSAFSPVAFSLGLLLVMATAFPTP). An intrachain disulfide couples Cys-72 to Cys-78. Ser-81 carries the post-translational modification Phosphoserine. Cys-101 and Cys-111 form a disulfide bridge. The disordered stretch occupies residues 156–175 (QKGKNPDKATTPNPTTNAGL). Residues 163–175 (KATTPNPTTNAGL) are compositionally biased toward polar residues.

The protein belongs to the IL-6 superfamily. In terms of assembly, component of a hexamer of two molecules each of IL6, IL6R and IL6ST; first binds to IL6R to associate with the signaling subunit IL6ST. Interacts with IL6R (via the N-terminal ectodomain); this interaction may be affected by IL6R-binding with SORL1, hence decreasing IL6 cis signaling. Interacts with SORL1 (via the N-terminal ectodomain); this interaction leads to IL6 internalization and lysosomal degradation. May form a trimeric complex with the soluble SORL1 ectodomain and soluble IL6R receptor; this interaction might stabilize circulating IL6, hence promoting IL6 trans signaling.

It localises to the secreted. Functionally, cytokine with a wide variety of biological functions in immunity, tissue regeneration, and metabolism. Binds to IL6R, then the complex associates to the signaling subunit IL6ST/gp130 to trigger the intracellular IL6-signaling pathway. The interaction with the membrane-bound IL6R and IL6ST stimulates 'classic signaling', whereas the binding of IL6 and soluble IL6R to IL6ST stimulates 'trans-signaling'. Alternatively, 'cluster signaling' occurs when membrane-bound IL6:IL6R complexes on transmitter cells activate IL6ST receptors on neighboring receiver cells. Its function is as follows. IL6 is a potent inducer of the acute phase response. Rapid production of IL6 contributes to host defense during infection and tissue injury, but excessive IL6 synthesis is involved in disease pathology. In the innate immune response, is synthesized by myeloid cells, such as macrophages and dendritic cells, upon recognition of pathogens through toll-like receptors (TLRs) at the site of infection or tissue injury. In the adaptive immune response, is required for the differentiation of B cells into immunoglobulin-secreting cells. Plays a major role in the differentiation of CD4(+) T cell subsets. Essential factor for the development of T follicular helper (Tfh) cells that are required for the induction of germinal-center formation. Required to drive naive CD4(+) T cells to the Th17 lineage. Also required for proliferation of myeloma cells and the survival of plasmablast cells. Acts as an essential factor in bone homeostasis and on vessels directly or indirectly by induction of VEGF, resulting in increased angiogenesis activity and vascular permeability. Induces, through 'trans-signaling' and synergistically with IL1B and TNF, the production of VEGF. Involved in metabolic controls, is discharged into the bloodstream after muscle contraction increasing lipolysis and improving insulin resistance. 'Trans-signaling' in central nervous system also regulates energy and glucose homeostasis. Mediates, through GLP-1, crosstalk between insulin-sensitive tissues, intestinal L cells and pancreatic islets to adapt to changes in insulin demand. Also acts as a myokine. Plays a protective role during liver injury, being required for maintenance of tissue regeneration. Also has a pivotal role in iron metabolism by regulating HAMP/hepcidin expression upon inflammation or bacterial infection. Through activation of IL6ST-YAP-NOTCH pathway, induces inflammation-induced epithelial regeneration. This chain is Interleukin-6 (IL6), found in Sus scrofa (Pig).